A 215-amino-acid polypeptide reads, in one-letter code: 3-demethoxyubiquinol 3-hydroxylase (215 aa).

Fe cation contacts are provided by Glu64, Glu94, His97, Glu146, Glu178, and His181.

It belongs to the COQ7 family. Fe cation serves as cofactor.

The protein resides in the cell membrane. The catalysed reaction is a 5-methoxy-2-methyl-3-(all-trans-polyprenyl)benzene-1,4-diol + AH2 + O2 = a 3-demethylubiquinol + A + H2O. Its pathway is cofactor biosynthesis; ubiquinone biosynthesis. In terms of biological role, catalyzes the hydroxylation of 2-nonaprenyl-3-methyl-6-methoxy-1,4-benzoquinol during ubiquinone biosynthesis. This chain is 3-demethoxyubiquinol 3-hydroxylase, found in Bordetella avium (strain 197N).